The sequence spans 317 residues: Protein CbxX, plasmid (317 aa).

85–92 (GNPGTGKT) serves as a coordination point for ATP.

Belongs to the CbxX/CfxQ family.

Seems to be necessary for the expression of RuBisCO. The polypeptide is Protein CbxX, plasmid (cbxXP) (Cupriavidus necator (strain ATCC 17699 / DSM 428 / KCTC 22496 / NCIMB 10442 / H16 / Stanier 337) (Ralstonia eutropha)).